A 118-amino-acid chain; its full sequence is Large ribosomal subunit protein bL17 (118 aa).

The protein belongs to the bacterial ribosomal protein bL17 family. As to quaternary structure, part of the 50S ribosomal subunit. Contacts protein L32.

This chain is Large ribosomal subunit protein bL17, found in Gemmatimonas aurantiaca (strain DSM 14586 / JCM 11422 / NBRC 100505 / T-27).